We begin with the raw amino-acid sequence, 231 residues long: Eukaryotic translation initiation factor 4E-1 (231 aa).

A disordered region spans residues 1 to 55 (MVVEDTQKSSITDDQITANPNNENEDLEEGEILDDDDSSATSRPPSSSGALARNP). The span at 8 to 18 (KSSITDDQITA) shows a compositional bias: polar residues. Acidic residues predominate over residues 23–38 (ENEDLEEGEILDDDDS). Over residues 39 to 48 (SATSRPPSSS) the composition is skewed to low complexity. 2 EIF4G-binding regions span residues 56–59 (HPLE) and 66–102 (FDNP…NNIH). Residues 74-79 (KQAAWG), lysine 106, and 124-125 (WE) contribute to the mRNA site. Residues cysteine 129 and cysteine 167 are joined by a disulfide bond. Positions 150–159 (YTLLGMIGEQ) are EIF4G-binding. MRNA is bound by residues 174–179 (RNRQEK) and 219–223 (KKHDR).

This sequence belongs to the eukaryotic initiation factor 4E family. In terms of assembly, EIF4F is a multi-subunit complex, the composition of which varies with external and internal environmental conditions. It is composed of at least EIF4A, EIF4E and EIF4G. EIF4E is also known to interact with other partners. In higher plants two isoforms of EIF4F have been identified, named isoform EIF4F and isoform EIF(iso)4F. Isoform EIF4F has subunits p220 and p26, whereas isoform EIF(iso)4F has subunits p82 and p28. (Microbial infection) Interacts with potyvirus peanut stripe virus (PStV) helper component proteinase (HC-Pro) in the cytoplasm and with PStV viral genome-linked protein (VPg) in the nucleus; these interactions are possible in susceptible hosts but impaired in resistant plants. Post-translationally, according to the redox status, the Cys-129-Cys-167 disulfide bridge may have a role in regulating protein function by affecting its ability to bind capped mRNA. As to expression, expressed ubiquitously with highest levels in young leaves and roots, and lowest levels in flowers.

Its subcellular location is the nucleus. The protein resides in the cytoplasm. Its function is as follows. Component of the protein complex eIF4F, which is involved in the recognition of the mRNA cap, ATP-dependent unwinding of 5'-terminal secondary structure and recruitment of mRNA to the ribosome. Recognizes and binds the 7-methylguanosine-containing mRNA cap during an early step in the initiation of protein synthesis and facilitates ribosome binding by inducing the unwinding of the mRNAs secondary structures. Key component of recessive resistance to potyviruses such as peanut stripe virus (PStV). In terms of biological role, (Microbial infection) Susceptibility host factor required for viral infection by recruiting viral RNAs to the host ribosomal complex via an interaction with viral genome-linked protein (VPg). The protein is Eukaryotic translation initiation factor 4E-1 of Arachis hypogaea (Peanut).